The following is a 112-amino-acid chain: Gastrula zinc finger protein XlCGF16.1 (112 aa).

4 consecutive C2H2-type zinc fingers follow at residues 6-28 (YNCS…QKTH), 34-56 (FVCF…QRIH), 62-84 (FSCT…HKTH), and 90-112 (FLCF…HRTH).

The protein belongs to the krueppel C2H2-type zinc-finger protein family.

It localises to the nucleus. May be involved in transcriptional regulation. The protein is Gastrula zinc finger protein XlCGF16.1 of Xenopus laevis (African clawed frog).